The following is a 48-amino-acid chain: Keratin-associated protein 22-1 (48 aa).

Interacts with hair keratins.

In terms of biological role, in the hair cortex, hair keratin intermediate filaments are embedded in an interfilamentous matrix, consisting of hair keratin-associated proteins (KRTAP), which are essential for the formation of a rigid and resistant hair shaft through their extensive disulfide bond cross-linking with abundant cysteine residues of hair keratins. The matrix proteins include the high-sulfur and high-glycine-tyrosine keratins. The sequence is that of Keratin-associated protein 22-1 (KRTAP22-1) from Homo sapiens (Human).